Consider the following 256-residue polypeptide: Protein crossbronx-like (256 aa).

In terms of domain architecture, UBC core spans 17–179; sequence NQGYQVLAEY…AKASIVWSWK (163 aa).

It belongs to the ubiquitin-conjugating enzyme family. FTS subfamily.

The polypeptide is Protein crossbronx-like (Drosophila mojavensis (Fruit fly)).